A 373-amino-acid polypeptide reads, in one-letter code: 3 beta-hydroxysteroid dehydrogenase/Delta 5--&gt;4-isomerase type 1 (373 aa).

NADP(+)-binding positions include 10–15, Y155, and K159; that span reads GAGGFV. Residue K159 is the Proton donor of the active site. A helical transmembrane segment spans residues 288-308; that stretch reads LPLLYWLAFLLETVSFLLRPV.

This sequence belongs to the 3-beta-HSD family. As to expression, steroidogenic tissues (includes testes, ovaries and adrenal glands).

The protein localises to the endoplasmic reticulum membrane. It localises to the mitochondrion membrane. It catalyses the reaction a 3beta-hydroxy-Delta(5)-steroid + NAD(+) = a 3-oxo-Delta(5)-steroid + NADH + H(+). The catalysed reaction is pregnenolone + NAD(+) = pregn-5-ene-3,20-dione + NADH + H(+). The enzyme catalyses 3beta-hydroxyandrost-5-en-17-one + NAD(+) = androst-5-ene-3,17-dione + NADH + H(+). It carries out the reaction androst-5-en-3beta,17beta-diol + NAD(+) = 17beta-hydroxy-androst-5-en-3-one + NADH + H(+). It catalyses the reaction a 3beta-hydroxysteroid + NADP(+) = a 3-oxosteroid + NADPH + H(+). The catalysed reaction is 5alpha-androstane-3beta,17beta-diol + NADP(+) = 17beta-hydroxy-5alpha-androstan-3-one + NADPH + H(+). The enzyme catalyses 3beta-hydroxy-5alpha-androstan-17-one + NADP(+) = 5alpha-androstan-3,17-dione + NADPH + H(+). It carries out the reaction a 3-oxo-Delta(5)-steroid = a 3-oxo-Delta(4)-steroid. It catalyses the reaction pregn-5-ene-3,20-dione = progesterone. The catalysed reaction is androst-5-ene-3,17-dione = androst-4-ene-3,17-dione. The enzyme catalyses 17beta-hydroxy-androst-5-en-3-one = testosterone. It carries out the reaction 5alpha-androstane-3beta,17beta-diol + NAD(+) = 17beta-hydroxy-5alpha-androstan-3-one + NADH + H(+). The protein operates within steroid hormone biosynthesis. It functions in the pathway steroid metabolism. Its function is as follows. A bifunctional enzyme responsible for the oxidation and isomerization of 3beta-hydroxy-Delta(5)-steroid precursors to 3-oxo-Delta(4)-steroids, an essential step in steroid hormone biosynthesis. Specifically catalyzes the conversion of pregnenolone to progesterone, 17alpha-hydroxypregnenolone to 17alpha-hydroxyprogesterone, dehydroepiandrosterone (DHEA) to 4-androstenedione, and androstenediol to testosterone. Additionally, catalyzes the interconversion between 3beta-hydroxy and 3-oxo-5alpha-androstane steroids controlling the bioavalability of the active forms. Specifically converts dihydrotestosterone to its inactive form 5alpha-androstanediol, that does not bind androgen receptor/AR. Also converts androstanedione, a precursor of testosterone and estrone, to epiandrosterone. Expected to use NAD(+) as preferred electron donor for the 3-beta-hydroxy-steroid dehydrogenase activity and NADPH for the 3-ketosteroid reductase activity. The protein is 3 beta-hydroxysteroid dehydrogenase/Delta 5--&gt;4-isomerase type 1 of Mus musculus (Mouse).